Consider the following 556-residue polypeptide: Endoplasmic reticulum membrane protein 65 (556 aa).

At 1 to 87 (MQHKDTAVAK…IRIPMFLEKF (87 aa)) the chain is on the cytoplasmic side. Phosphoserine is present on Ser-22. The helical transmembrane segment at 88-108 (MLFALLTSLDCFLYYFTVLPI) threads the bilayer. Residues 109 to 151 (RLIKGYVKQFKSYRQHYRLQQRSGHKNKIPFRYRITSREYKER) are Lumenal-facing. The chain crosses the membrane as a helical span at residues 152–172 (CMIFIIVISSILLSKLDTSKL). Topologically, residues 173–224 (YHRIKRQSTMKLYMLFSVLEMADKMLASLGQSLLTVMLSRKNSERILLHKCL) are cytoplasmic. A helical transmembrane segment spans residues 225–245 (LVSMSLTYVTIHGYVLVYQAI). Topologically, residues 246–330 (SLNIAVNSYS…INFWSPRSTL (85 aa)) are lumenal. An N-linked (GlcNAc...) asparagine glycan is attached at Asn-318. Residues 331–351 (SIVINILCGPMVSVVGSEVLV) form a helical membrane-spanning segment. The Cytoplasmic segment spans residues 352-391 (DWAKHAYITKFNRIRPQIYDKFYYIIYKDYSTRTHKLEDR). A helical membrane pass occupies residues 392 to 412 (LGLPLPAFVVLFIVMVRPTLF). Residues 413–428 (KSSEPSYLPSLFRILF) are Lumenal-facing. Residues 429-449 (MGASVFLLALLAKFTLDLILI) traverse the membrane as a helical segment. Residues 450 to 556 (KWSKRIEQRF…RYKMVSKRIW (107 aa)) are Cytoplasmic-facing.

It belongs to the TAPT1 family. In terms of assembly, interacts with SLP1.

The protein localises to the endoplasmic reticulum membrane. It localises to the mitochondrion. May be involved in membrane protein folding. The sequence is that of Endoplasmic reticulum membrane protein 65 from Saccharomyces cerevisiae (strain ATCC 204508 / S288c) (Baker's yeast).